The sequence spans 166 residues: Lipoprotein signal peptidase (166 aa).

Transmembrane regions (helical) follow at residues 12-32 (WLWVVVAVLIIDLGSKFLILQ), 70-90 (WFFSGIAIGICVVLTVLMYRS), and 102-122 (ALIIGGALGNLFDRLWHGFVV). Catalysis depends on residues Asp-123 and Asp-141. A helical membrane pass occupies residues 137 to 157 (FNLADSAICIGAALIVLEGFL).

It belongs to the peptidase A8 family.

Its subcellular location is the cell inner membrane. It catalyses the reaction Release of signal peptides from bacterial membrane prolipoproteins. Hydrolyzes -Xaa-Yaa-Zaa-|-(S,diacylglyceryl)Cys-, in which Xaa is hydrophobic (preferably Leu), and Yaa (Ala or Ser) and Zaa (Gly or Ala) have small, neutral side chains.. Its pathway is protein modification; lipoprotein biosynthesis (signal peptide cleavage). Functionally, this protein specifically catalyzes the removal of signal peptides from prolipoproteins. This Klebsiella pneumoniae subsp. pneumoniae (strain ATCC 700721 / MGH 78578) protein is Lipoprotein signal peptidase.